The primary structure comprises 96 residues: uncharacterized protein (96 aa).

This is an uncharacterized protein from Saccharomyces cerevisiae (strain ATCC 204508 / S288c) (Baker's yeast).